Consider the following 353-residue polypeptide: MSKREAFNDTFLKAARGEKTNHVPVWYMRQAGRSQPEYRKLKEKYGLVEITHQPELCAYVTRLPVEQYGVDAAILYKDIMTPLPYIGVDVEIKNGIGPVIDQPVRSAADIEKLGELNPEQDVPYVLETIRLLVNEQLNVPLIGFSGAPFTLASYMIEGGPSKNYNKTKAFMHSMPQAWKMLMDKLADMIIVYAKAQINAGAKAIQIFDSWVGALNREDYRQFIKPVMDRIFRELSAEQVPLIMFGVGASHLAGDWHDLPLDVVGLDWRLGIDDARKQGITKTVQGNLDPSLLLAPWEVIEKKAKAILDQGMKTDGFIFNLGHGVFPDVNPETLKKLTAFVHEYSAAKKTEQSS.

Substrate is bound by residues R29 to R33, D78, Y154, S209, and H322.

This sequence belongs to the uroporphyrinogen decarboxylase family. Homodimer.

Its subcellular location is the cytoplasm. It catalyses the reaction uroporphyrinogen III + 4 H(+) = coproporphyrinogen III + 4 CO2. It functions in the pathway porphyrin-containing compound metabolism; protoporphyrin-IX biosynthesis; coproporphyrinogen-III from 5-aminolevulinate: step 4/4. In terms of biological role, catalyzes the decarboxylation of four acetate groups of uroporphyrinogen-III to yield coproporphyrinogen-III. This chain is Uroporphyrinogen decarboxylase, found in Bacillus velezensis (strain DSM 23117 / BGSC 10A6 / LMG 26770 / FZB42) (Bacillus amyloliquefaciens subsp. plantarum).